Consider the following 357-residue polypeptide: Heat-inducible transcription repressor HrcA (357 aa).

It belongs to the HrcA family.

Negative regulator of class I heat shock genes (grpE-dnaK-dnaJ and groELS operons). Prevents heat-shock induction of these operons. In Chlorobium luteolum (strain DSM 273 / BCRC 81028 / 2530) (Pelodictyon luteolum), this protein is Heat-inducible transcription repressor HrcA.